The chain runs to 297 residues: MTNGQEPIAMLIAVSSADRLDLWQAIVLGFVQGATEFLPISSTAHLKVVPVVLGWGDPGVAFTAVIQLGSIVAVLSYFRQDLTYVLRGLVSAVRRQDFRSEPAQMGLGILFGTIPILIGGLLIKRFIPDYDNSPLRSLAAIAIVSIVMGLLLGIAEQLSKHQRDLSQLRLADGLWMGFAQALALIPGVSRSGSTLTAGLFQGLKRDTAARFSFLLGIPAITIAGLVELKDLLEAGIDGSSLGVLAIGTLSSLIFSWLAIAWLLRFLRTHNTWSFVVYRIIFGGVILTAIATGTLQNI.

7 helical membrane-spanning segments follow: residues Pro58–Phe78, Ala103–Ile123, Leu138–Leu158, Leu168–Val188, Ala208–Leu228, Val243–Leu263, and Phe274–Leu294.

This sequence belongs to the UppP family.

The protein resides in the cell inner membrane. It catalyses the reaction di-trans,octa-cis-undecaprenyl diphosphate + H2O = di-trans,octa-cis-undecaprenyl phosphate + phosphate + H(+). Its function is as follows. Catalyzes the dephosphorylation of undecaprenyl diphosphate (UPP). Confers resistance to bacitracin. The sequence is that of Undecaprenyl-diphosphatase from Synechococcus sp. (strain ATCC 27144 / PCC 6301 / SAUG 1402/1) (Anacystis nidulans).